The chain runs to 87 residues: Diazepam-binding inhibitor-like 5 (87 aa).

Residues 2-87 (SQVEFEMACA…VEELKKKEPC (86 aa)) form the ACB domain. An acyl-CoA-binding positions include 29–33 (YSFYK), Lys-55, and Tyr-74.

This sequence belongs to the ACBP family. Exclusively expressed in late spermatids and spermatozoa. Not found in epididymis, spleen, bone marrow, skin, liver, brain, heart, kidney, muscle.

It is found in the cytoplasm. May be involved in the energy metabolism of the mature sperm. This Mus musculus (Mouse) protein is Diazepam-binding inhibitor-like 5 (Dbil5).